A 442-amino-acid polypeptide reads, in one-letter code: Armadillo-like helical domain containing protein 1 (442 aa).

The sequence is that of Armadillo-like helical domain containing protein 1 from Bos taurus (Bovine).